The primary structure comprises 571 residues: Medium/long-chain-fatty-acid--CoA ligase FadD8 (571 aa).

Residues 1-22 (MSTAGDDAVGVPPACGGRSDAV) form a disordered region.

The protein belongs to the ATP-dependent AMP-binding enzyme family.

The catalysed reaction is a medium-chain fatty acid + ATP + CoA = a medium-chain fatty acyl-CoA + AMP + diphosphate. It catalyses the reaction a long-chain fatty acid + ATP + CoA = a long-chain fatty acyl-CoA + AMP + diphosphate. It carries out the reaction hexanoate + ATP + CoA = hexanoyl-CoA + AMP + diphosphate. The enzyme catalyses dodecanoate + ATP + CoA = dodecanoyl-CoA + AMP + diphosphate. The catalysed reaction is hexadecanoate + ATP + CoA = hexadecanoyl-CoA + AMP + diphosphate. It participates in lipid metabolism; fatty acid metabolism. In terms of biological role, catalyzes the activation of medium/long-chain fatty acids as acyl-coenzyme A (acyl-CoA). The protein is Medium/long-chain-fatty-acid--CoA ligase FadD8 of Mycobacterium tuberculosis (strain ATCC 25618 / H37Rv).